A 134-amino-acid chain; its full sequence is Cerato-platanin (134 aa).

The first 14 residues, 1-14, serve as a signal peptide directing secretion; the sequence is MKFSILPMIASAMA. The binding of oligomers of N-acetylglucosamine (GlcNAc) stretch occupies residues 18 to 20; that stretch reads SYD. Binding of N-acetylglucosamine tetramer (GlcNAc-4) stretches follow at residues 31–43, 65–68, and 91–95; these read SVAC…GLMA, GWDS, and DSGRG. Cystine bridges form between cysteine 34–cysteine 71 and cysteine 74–cysteine 129. The interval 113–116 is binding of oligomers of N-acetylglucosamine (GlcNAc); that stretch reads AGRV.

Belongs to the cerato-platanin family. Monomer.

It is found in the secreted. The protein resides in the cell wall. Functionally, phytotoxin which causes production of phytoalexin in platanus acerifolia, platanus occidentalis and platanus orientalis. Induces cell necrosis in tobacco leaves, and in callus cells and leaves of P.acerifolia. Induces reactive oxygen species (ROS) synthesis, nitric oxide (NO) production and mitogen-activated protein kinases (MAPKs) phosphorylation in the leaves of A.thaliana and P.acerifolia. Results in H(2)O(2) production on the epidermis around the stomata, rapid closure of the stomata, reduced photosynthetic and CO(2) assimilation rate, and an increase in a number of volatile organic compound (VOC) emission in A.thaliana leaves. Induces overexpression of genes related to salicylic acid- and ethylene-signaling, camalexin synthesis, ROS production and oxidative stress, and genes of various receptor kinases, and down-regulation of a number of jasmonic acid (JA)-signaling genes in A.thaliana leaves. Renders resistance against C.platani in A.thaliana and P.acerifolia. Renders localised resistance of A.thaliana against infection by virulent foliar pathogens B.cinerea and P.syringae pv. tomato. Binds cellulose analog carboxymethyl cellulose (CMC). Expansin-like protein with probable fungal and plant cell wall loosening activity based on its non-enzymatic cellulose weakening activity in vitro. Increases glucose production by cellulase after pre-incubation of cellulose with this protein. In contrast, according to PubMed:23512479, no synergistic effect with cellulases. May have a structural role in the fungal cell wall based on its ability to bind chitin, but does not bind beta-1,3-glucan. The protein is Cerato-platanin of Ceratocystis fimbriata f. sp. platani.